Consider the following 206-residue polypeptide: MKIDITSLNGDSAGSIDLDDSIFGLEPRQDLIARMVRYQLAKRRAGTHKTKGRAEIARTGKKLYKQKGTGSARHGSARVPQFRGGGRAFGPVVRSHAHDLPKKVRALALKHALSAKAQGGGIIVWSDASATDAKTKALKASFAKAGLLSALIIDGAEVEQNFALAARNIPQIDVLPVQGINVYDILRREKLVLTRAAIDALEARFK.

The protein belongs to the universal ribosomal protein uL4 family. In terms of assembly, part of the 50S ribosomal subunit.

Its function is as follows. One of the primary rRNA binding proteins, this protein initially binds near the 5'-end of the 23S rRNA. It is important during the early stages of 50S assembly. It makes multiple contacts with different domains of the 23S rRNA in the assembled 50S subunit and ribosome. In terms of biological role, forms part of the polypeptide exit tunnel. This Methylocella silvestris (strain DSM 15510 / CIP 108128 / LMG 27833 / NCIMB 13906 / BL2) protein is Large ribosomal subunit protein uL4.